Consider the following 770-residue polypeptide: Molybdenum cofactor sulfurase (770 aa).

Residue Lys243 is modified to N6-(pyridoxal phosphate)lysine. The active site involves Cys405. The 159-residue stretch at 611–769 (GDEVANWLCQ…LACGDPITVL (159 aa)) folds into the MOSC domain. Ser726 is modified (phosphoserine).

The protein belongs to the class-V pyridoxal-phosphate-dependent aminotransferase family. MOCOS subfamily. Pyridoxal 5'-phosphate is required as a cofactor.

It carries out the reaction Mo-molybdopterin + L-cysteine + AH2 = thio-Mo-molybdopterin + L-alanine + A + H2O. It participates in cofactor biosynthesis; molybdopterin biosynthesis. Sulfurates the molybdenum cofactor. Sulfation of molybdenum is essential for xanthine dehydrogenase (XDH) and aldehyde oxidase (ADO) enzymes in which molybdenum cofactor is liganded by 1 oxygen and 1 sulfur atom in active form. In Drosophila grimshawi (Hawaiian fruit fly), this protein is Molybdenum cofactor sulfurase.